The primary structure comprises 117 residues: Protein RALF-like 32 (117 aa).

A signal peptide spans 1-26 (MEIKPSRIFSTITIFFLCLLLAHVTS). Positions 27–64 (KASSSSLCNGSVAECSSMVETEEMSVIMESWSSQRLTE) are cleaved as a propeptide — removed in mature form. Asn-35 carries N-linked (GlcNAc...) asparagine glycosylation. The segment at 77 to 107 (RNQPACDGGKRGESYSTQCLPPPSNPYSRGC) is disordered. 2 cysteine pairs are disulfide-bonded: Cys-82–Cys-95 and Cys-107–Cys-113.

Belongs to the plant rapid alkalinization factor (RALF) family. Proteolytically cleaved, probably by S1P, a subtilisin-like serine protease (subtilase).

It is found in the secreted. In terms of biological role, cell signaling peptide that may regulate plant stress, growth, and development. Mediates a rapid alkalinization of extracellular space by mediating a transient increase in the cytoplasmic Ca(2+) concentration leading to a calcium-dependent signaling events through a cell surface receptor and a concomitant activation of some intracellular mitogen-activated protein kinases. The protein is Protein RALF-like 32 (RALFL32) of Arabidopsis thaliana (Mouse-ear cress).